The chain runs to 1450 residues: Collagen alpha-1(I) chain (1450 aa).

The N-terminal stretch at 1-22 (MFSFVDNRLLVLLAACVLLVRA) is a signal peptide. Residues 23–148 (LDQEDIESGL…PPGLGGNFAP (126 aa)) constitute a propeptide, N-terminal propeptide. In terms of domain architecture, VWFC spans 31–90 (GLCHQEGTTYSDKDVWKPEPCVICVCDNGNIMCDDVTCGDYPVDCPNAEIPFGECCPVCP). The segment at 97–1201 (YSEQTGVEGP…EPKSHGDGRY (1105 aa)) is disordered. Positions 106–116 (PKGEVGPKGDR) are enriched in basic and acidic residues. The span at 130 to 140 (LPGPPGPPGPP) shows a compositional bias: pro residues. Gln149 is modified (pyrrolidone carboxylic acid). Lys157 bears the Allysine mark. Residues 166 to 181 (PMGPMGPRGPPGPSGS) are compositionally biased toward pro residues. 4-hydroxyproline is present on residues Pro176, Pro182, Pro194, Pro197, Pro212, Pro227, Pro242, and Pro248. Residues 182–206 (PGPQGFQGPSGEPGEPGAAGALGPR) are compositionally biased toward low complexity. The span at 215-229 (NGDDGESGKPGRPGE) shows a compositional bias: basic and acidic residues. At Lys251 the chain carries 5-hydroxylysine; alternate. O-linked (Gal...) hydroxylysine; alternate glycosylation occurs at Lys251. Low complexity predominate over residues 266-292 (NGPAGPKGEPGNPGENGAPGQAGPRGL). Residues Pro275, Pro278, Pro284, Pro293, Pro299, Pro314, Pro320, Pro329, Pro332, Pro359, Pro362, Pro374, Pro380, Pro389, Pro395, Pro398, and Pro413 each carry the 4-hydroxyproline modification. The span at 317–331 (AGPPGPTGPTGPPGF) shows a compositional bias: pro residues. The span at 352-374 (PQGARGEPGAPGPAGAAGPSGNP) shows a compositional bias: low complexity. Residues 378-387 (GQPGGKGATG) are compositionally biased toward gly residues. A compositionally biased stretch (low complexity) spans 388 to 443 (SPGIAGAPGFPGARGAPGPQGPAGAPGPKGNNGEPGAQGNKGEPGAKGEPGPAGVQ). The residue at position 416 (Lys416) is a 5-hydroxylysine. 7 positions are modified to 4-hydroxyproline: Pro422, Pro437, Pro446, Pro461, Pro467, Pro476, and Pro482. Residues 471–480 (GERGGPGSRG) are compositionally biased toward gly residues. Lys491 bears the 5-hydroxylysine mark. 4-hydroxyproline occurs at positions 494, 515, 521, 530, 533, 551, 569, 578, 590, 608, 626, 632, 644, 650, 656, and 668. Low complexity-rich tracts occupy residues 568 to 578 (FPGPKGAAGEP) and 586 to 596 (VAGPPGATGAP). The segment covering 637 to 650 (PAGEAGKPGEQGAP) has biased composition (low complexity). A compositionally biased stretch (gly residues) spans 669-678 (GERGGQGPAG). Residues 679–701 (AQGPRGSPGSPGNDGAKGEAGAA) are compositionally biased toward low complexity. 5 positions are modified to 4-hydroxyproline: Pro689, Pro704, Pro710, Pro716, and Pro725. Positions 702–711 (GAPGGRGPPG) are enriched in gly residues. 5-hydroxylysine is present on Lys737. 4-hydroxyproline is present on residues Pro743, Pro758, Pro764, Pro785, Pro791, Pro794, Pro803, Pro809, Pro827, Pro836, and Pro845. The span at 796-806 (PAGICGPPGAD) shows a compositional bias: low complexity. Residues 817-869 (DAGPKGDAGAPGPAGPTGAPGPAGNVGAPGPKGTRGAAGPPGATGFPGAAGRL) show a composition bias toward low complexity. Residue Lys848 is modified to 5-hydroxylysine. Pro857 and Pro863 each carry 4-hydroxyproline. The residue at position 871 (Pro871) is a 3-hydroxyproline. 15 positions are modified to 4-hydroxyproline: Pro872, Pro881, Pro884, Pro908, Pro914, Pro923, Pro932, Pro950, Pro962, Pro968, Pro983, Pro989, Pro995, Pro1004, and Pro1010. Positions 917 to 943 (SGEKGSPGSDGPAGAPGIPGPQGIAGQ) are enriched in low complexity. Over residues 982–997 (PPGPSGPPGLGGPPGE) the composition is skewed to pro residues. A 5-hydroxylysine modification is found at Lys1019. The span at 1028–1043 (SGPPGAPGAPGAPGPV) shows a compositional bias: pro residues. Pro1031, Pro1034, and Pro1037 each carry 4-hydroxyproline. Positions 1064-1078 (AGPSGVRGAPGPAGA) are enriched in low complexity. A compositionally biased stretch (basic and acidic residues) spans 1079–1093 (RGDKGEAGEQGERGM). Residue Lys1082 is modified to 5-hydroxylysine. Residue Lys1094 is modified to 5-hydroxylysine; alternate. A glycan (O-linked (Gal...) hydroxylysine; alternate) is linked at Lys1094. 4-hydroxyproline occurs at positions 1106 and 1109. Residues 1120–1129 (PSGPAGPRGP) show a composition bias toward pro residues. 4-hydroxyproline is present on residues Pro1130 and Pro1145. The span at 1130 to 1145 (PGSSGSTGKDGVNGLP) shows a compositional bias: low complexity. 3-hydroxyproline is present on Pro1150. Pro1151 carries the post-translational modification 4-hydroxyproline. Residues 1163–1178 (AGPPGPPGPPGPPGPP) show a composition bias toward pro residues. Pro1165 carries the post-translational modification 3-hydroxyproline. At Pro1166 the chain carries 4-hydroxyproline. Residue Pro1168 is modified to 3-hydroxyproline. The residue at position 1169 (Pro1169) is a 4-hydroxyproline. 3-hydroxyproline is present on Pro1171. 4-hydroxyproline is present on residues Pro1172, Pro1175, and Pro1178. Lys1194 carries the allysine modification. The propeptide at 1205–1450 (DDANVVRDRD…GIDIGPVCFL (246 aa)) is C-terminal propeptide. The 236-residue stretch at 1215-1450 (LEVDTTLKSL…GIDIGPVCFL (236 aa)) folds into the Fibrillar collagen NC1 domain. Disulfide bonds link Cys1245-Cys1277, Cys1285-Cys1448, and Cys1356-Cys1401. Residues Asp1263, Asn1265, Gln1266, Cys1268, and Asp1271 each contribute to the Ca(2+) site. N-linked (GlcNAc...) asparagine glycosylation occurs at Asn1351.

This sequence belongs to the fibrillar collagen family. In terms of assembly, trimers of one alpha 2(I) and two alpha 1(I) chains. In terms of processing, contains mostly 4-hydroxyproline. Proline residues at the third position of the tripeptide repeating unit (G-X-Y) are hydroxylated in some or all of the chains. Post-translationally, contains 3-hydroxyproline at a few sites. This modification occurs on the first proline residue in the sequence motif Gly-Pro-Hyp, where Hyp is 4-hydroxyproline. Lysine residues at the third position of the tripeptide repeating unit (G-X-Y) are 5-hydroxylated in some or all of the chains. In terms of processing, O-glycosylated on hydroxylated lysine residues. The O-linked glycan consists of a Glc-Gal disaccharide.

The protein resides in the secreted. Its subcellular location is the extracellular space. The protein localises to the extracellular matrix. Its function is as follows. Type I collagen is a member of group I collagen (fibrillar forming collagen). This chain is Collagen alpha-1(I) chain (COL1A1), found in Cynops pyrrhogaster (Japanese fire-bellied newt).